Reading from the N-terminus, the 75-residue chain is MKLLLFTALVLVVISLIEVEAENERACIPLEKECTKTPGNCCSGLKCDCYRRFEQGVAKGIQCWCIEEDVTYKGV.

An N-terminal signal peptide occupies residues 1–21 (MKLLLFTALVLVVISLIEVEA). Residues 22 to 25 (ENER) constitute a propeptide that is removed on maturation.

This sequence belongs to the neurotoxin 19 (CSTX) family. 06 (U6-Lctx) subfamily. In terms of processing, contains 4 disulfide bonds. Expressed by the venom gland.

Its subcellular location is the secreted. The chain is U6-lycotoxin-Ls1a from Lycosa singoriensis (Wolf spider).